A 437-amino-acid chain; its full sequence is Putative metabolite transport protein NicT (437 aa).

The next 12 membrane-spanning stretches (helical) occupy residues 28-48 (LIPF…NVGF), 66-86 (LGAG…NLIL), 93-113 (LWIA…MFVT), 123-143 (FLLG…LTMW), 152-172 (IIAL…PISG), 189-209 (WLFL…FWAL), 254-274 (VWML…MGFW), 290-310 (IGLL…MIGA), 320-340 (WHII…TLFS), 347-367 (VVLF…FFSL), 374-394 (GTAA…AGLV), and 411-431 (AALW…IALP).

The protein belongs to the major facilitator superfamily.

It is found in the membrane. Probable transporter, possibly involved in the aerobic nicotinate degradation pathway. This is Putative metabolite transport protein NicT (nicT) from Pseudomonas putida (strain ATCC 47054 / DSM 6125 / CFBP 8728 / NCIMB 11950 / KT2440).